We begin with the raw amino-acid sequence, 138 residues long: Aspartate 1-decarboxylase (138 aa).

Residue Ser25 is the Schiff-base intermediate with substrate; via pyruvic acid of the active site. A Pyruvic acid (Ser) modification is found at Ser25. Thr57 provides a ligand contact to substrate. Residue Tyr58 is the Proton donor of the active site. Gly73–Ala75 contributes to the substrate binding site.

This sequence belongs to the PanD family. In terms of assembly, heterooctamer of four alpha and four beta subunits. Requires pyruvate as cofactor. In terms of processing, is synthesized initially as an inactive proenzyme, which is activated by self-cleavage at a specific serine bond to produce a beta-subunit with a hydroxyl group at its C-terminus and an alpha-subunit with a pyruvoyl group at its N-terminus.

The protein localises to the cytoplasm. It catalyses the reaction L-aspartate + H(+) = beta-alanine + CO2. The protein operates within cofactor biosynthesis; (R)-pantothenate biosynthesis; beta-alanine from L-aspartate: step 1/1. Functionally, catalyzes the pyruvoyl-dependent decarboxylation of aspartate to produce beta-alanine. This chain is Aspartate 1-decarboxylase, found in Renibacterium salmoninarum (strain ATCC 33209 / DSM 20767 / JCM 11484 / NBRC 15589 / NCIMB 2235).